The sequence spans 61 residues: Photosystem II reaction center protein K (61 aa).

Residues 1–24 constitute a propeptide that is removed on maturation; sequence MLNIFNLICICFNSALFSSSFLFA. The chain crosses the membrane as a helical span at residues 36 to 56; it reads IVDFMPVIPVLFFLLAFVWQA.

This sequence belongs to the PsbK family. PSII is composed of 1 copy each of membrane proteins PsbA, PsbB, PsbC, PsbD, PsbE, PsbF, PsbH, PsbI, PsbJ, PsbK, PsbL, PsbM, PsbT, PsbX, PsbY, PsbZ, Psb30/Ycf12, at least 3 peripheral proteins of the oxygen-evolving complex and a large number of cofactors. It forms dimeric complexes.

The protein resides in the plastid. The protein localises to the chloroplast thylakoid membrane. In terms of biological role, one of the components of the core complex of photosystem II (PSII). PSII is a light-driven water:plastoquinone oxidoreductase that uses light energy to abstract electrons from H(2)O, generating O(2) and a proton gradient subsequently used for ATP formation. It consists of a core antenna complex that captures photons, and an electron transfer chain that converts photonic excitation into a charge separation. The chain is Photosystem II reaction center protein K from Gossypium barbadense (Sea Island cotton).